We begin with the raw amino-acid sequence, 350 residues long: Induced myeloid leukemia cell differentiation protein Mcl-1 homolog (350 aa).

Lys-5 is covalently cross-linked (Glycyl lysine isopeptide (Lys-Gly) (interchain with G-Cter in ubiquitin)). Residues 23 to 95 (AGSGGASSSG…GPNVSATPPR (73 aa)) form a disordered region. Residues 31–41 (SGGRLLASGRE) are compositionally biased toward low complexity. Positions 50 to 61 (GGEAGAVIGGSA) are enriched in gly residues. A PEST-like region spans residues 104 to 175 (RASPPEEMEG…PAEEEEDELY (72 aa)). A Phosphoserine modification is found at Ser-121. Lys-136 participates in a covalent cross-link: Glycyl lysine isopeptide (Lys-Gly) (interchain with G-Cter in ubiquitin). A disordered region spans residues 150–169 (ASSGPGMDGSLPSTPPPAEE). Ser-159 carries the phosphoserine; by GSK3-alpha and GSK3-beta modification. A Phosphoserine modification is found at Ser-162. Thr-163 is modified (phosphothreonine). Glycyl lysine isopeptide (Lys-Gly) (interchain with G-Cter in ubiquitin) cross-links involve residues Lys-194 and Lys-197. Positions 209-223 (ALETLQRVGDGVQRN) match the BH3 motif. Positions 252–272 (HVFSDGVTNWGRIVTLISFGA) match the BH1 motif. Positions 304-319 (DWLVKQRGWDGFVEFF) match the BH2 motif. Residues 327–349 (GIRNVLLAFAGVAGVGAGLAYLI) traverse the membrane as a helical segment.

This sequence belongs to the Bcl-2 family. Interacts with HIF3A (via C-terminus domain). Interacts with BOK, BIK, BAX, BAK1, and TPT1. Interacts with unphosphorylated BAD. Interacts with BMF, BBC3 and PMAIP1. Interacts with BOP. Interacts with BCL2L11; may sequester BCL2L11 to prevent its pro-apoptotic activity. Interacts with GIMAP5 and HSPA8/HSC70; the interaction between HSPA8 and MCL1 is impaired in the absence of GIMAP5. Post-translationally, cleaved by CASP3 during apoptosis, yielding a pro-apoptotic C-terminal fragment. In terms of processing, rapidly degraded in the absence of phosphorylation in the PEST region. Phosphorylated on Ser-159, by GSK3, in response to IL3/interleukin-3 withdrawal. Phosphorylation at Ser-159 induces ubiquitination and proteasomal degradation, abrogating the anti-apoptotic activity. Treatment with taxol or okadaic acid induces phosphorylation on additional sites. Post-translationally, ubiquitinated. Ubiquitination is induced by phosphorylation at Ser-159. Deubiquitinated by USP20; leading to increased stability. Detected in peripheral blood mononuclear cells and bone marrow.

The protein localises to the membrane. It localises to the cytoplasm. Its subcellular location is the mitochondrion. It is found in the nucleus. The protein resides in the nucleoplasm. In terms of biological role, involved in the regulation of apoptosis versus cell survival, and in the maintenance of viability but not of proliferation. Mediates its effects by interactions with a number of other regulators of apoptosis. This Canis lupus familiaris (Dog) protein is Induced myeloid leukemia cell differentiation protein Mcl-1 homolog (MCL1).